Reading from the N-terminus, the 241-residue chain is Orotidine 5'-phosphate decarboxylase (241 aa).

Substrate contacts are provided by residues aspartate 15, lysine 36, 63 to 72, threonine 127, arginine 189, glutamine 198, glycine 218, and arginine 219; that span reads DLKFHDIPNT. Lysine 65 functions as the Proton donor in the catalytic mechanism.

It belongs to the OMP decarboxylase family. Type 1 subfamily. As to quaternary structure, homodimer.

It catalyses the reaction orotidine 5'-phosphate + H(+) = UMP + CO2. It participates in pyrimidine metabolism; UMP biosynthesis via de novo pathway; UMP from orotate: step 2/2. In terms of biological role, catalyzes the decarboxylation of orotidine 5'-monophosphate (OMP) to uridine 5'-monophosphate (UMP). The chain is Orotidine 5'-phosphate decarboxylase from Prochlorococcus marinus (strain MIT 9211).